Reading from the N-terminus, the 506-residue chain is Serine/threonine-protein kinase D6PKL1 (506 aa).

Residues 1–96 are disordered; the sequence is MASKYGSGVL…TCSSFSGNNK (96 aa). Over residues 12–23 the composition is skewed to basic and acidic residues; sequence ENKKEKGDKETP. Residues 24–54 are compositionally biased toward polar residues; the sequence is ETSYSSQSVSVNTLADQVSSTLSFAPSSDSK. Positions 55 to 67 are enriched in basic and acidic residues; that stretch reads TGGEVKFNEKSDQ. A compositionally biased stretch (low complexity) spans 77-92; it reads STSSDISDESTCSSFS. The Protein kinase domain maps to 123 to 456; it reads FRLLKRLGCG…ATEMKQHPFF (334 aa). Residues 129 to 137 and Lys152 contribute to the ATP site; that span reads LGCGDIGTV. Asp248 acts as the Proton acceptor in catalysis. Residues 475-495 form a disordered region; that stretch reads PVDYESAPATPAAATSTSVKS. A compositionally biased stretch (low complexity) spans 480 to 492; sequence SAPATPAAATSTS.

It belongs to the protein kinase superfamily. AGC Ser/Thr protein kinase family.

Its subcellular location is the cell membrane. The enzyme catalyses L-seryl-[protein] + ATP = O-phospho-L-seryl-[protein] + ADP + H(+). It carries out the reaction L-threonyl-[protein] + ATP = O-phospho-L-threonyl-[protein] + ADP + H(+). Protein kinase that regulates the auxin transport activity of PIN auxin efflux facilitators by direct phosphorylation. D6PK-mediated PIN phosphorylation promotes auxin transport in the hypocotyl and this is a prerequisite for PHOT1-dependent hypocotyl bending. This chain is Serine/threonine-protein kinase D6PKL1 (D6PKL1), found in Arabidopsis thaliana (Mouse-ear cress).